Reading from the N-terminus, the 312-residue chain is Methionyl-tRNA formyltransferase (312 aa).

S117–P120 contacts (6S)-5,6,7,8-tetrahydrofolate.

It belongs to the Fmt family.

The enzyme catalyses L-methionyl-tRNA(fMet) + (6R)-10-formyltetrahydrofolate = N-formyl-L-methionyl-tRNA(fMet) + (6S)-5,6,7,8-tetrahydrofolate + H(+). In terms of biological role, attaches a formyl group to the free amino group of methionyl-tRNA(fMet). The formyl group appears to play a dual role in the initiator identity of N-formylmethionyl-tRNA by promoting its recognition by IF2 and preventing the misappropriation of this tRNA by the elongation apparatus. This is Methionyl-tRNA formyltransferase from Bordetella pertussis (strain Tohama I / ATCC BAA-589 / NCTC 13251).